The primary structure comprises 264 residues: S-adenosylmethionine decarboxylase proenzyme (264 aa).

Residue Ser-113 is the Schiff-base intermediate with substrate; via pyruvic acid of the active site. A Pyruvic acid (Ser); by autocatalysis modification is found at Ser-113. His-118 acts as the Proton acceptor; for processing activity in catalysis. Cys-141 (proton donor; for catalytic activity) is an active-site residue.

It belongs to the prokaryotic AdoMetDC family. Type 2 subfamily. Heterooctamer of four alpha and four beta chains arranged as a tetramer of alpha/beta heterodimers. Requires pyruvate as cofactor. Post-translationally, is synthesized initially as an inactive proenzyme. Formation of the active enzyme involves a self-maturation process in which the active site pyruvoyl group is generated from an internal serine residue via an autocatalytic post-translational modification. Two non-identical subunits are generated from the proenzyme in this reaction, and the pyruvate is formed at the N-terminus of the alpha chain, which is derived from the carboxyl end of the proenzyme. The post-translation cleavage follows an unusual pathway, termed non-hydrolytic serinolysis, in which the side chain hydroxyl group of the serine supplies its oxygen atom to form the C-terminus of the beta chain, while the remainder of the serine residue undergoes an oxidative deamination to produce ammonia and the pyruvoyl group blocking the N-terminus of the alpha chain.

The enzyme catalyses S-adenosyl-L-methionine + H(+) = S-adenosyl 3-(methylsulfanyl)propylamine + CO2. It participates in amine and polyamine biosynthesis; S-adenosylmethioninamine biosynthesis; S-adenosylmethioninamine from S-adenosyl-L-methionine: step 1/1. Catalyzes the decarboxylation of S-adenosylmethionine to S-adenosylmethioninamine (dcAdoMet), the propylamine donor required for the synthesis of the polyamines spermine and spermidine from the diamine putrescine. The polypeptide is S-adenosylmethionine decarboxylase proenzyme (Xanthomonas campestris pv. campestris (strain B100)).